We begin with the raw amino-acid sequence, 341 residues long: MRILGIETSCDETGIAIYDDEKGILANQLYSQIKLHADYGGVVPELASRDHVRKTVPLIQAALREADLTPADLDGVAYTAGPGLVGALLVGATVGRSLAFAWGVPAVPVHHMEGHLLAPMLEENPPAFPFVALLVSGGHTQLISVTGIGEYRLLGESIDDAAGEAFDKTAKLLGLDYPGGPVLSRMAQQGVPGRFVFPRPMTDRPGLDLSFSGLKTFAANTIHANGDDAQTRADIARAFEDAVVDTLAIKCRRALDQTGFQRLVMAGGVSANRALRGRLAQMMQQRGGAVFYARPEFCTDNGAMIAYAGMVRLKSGVDADLSISVRPRWPLAELPPVAARS.

Positions 111 and 115 each coordinate Fe cation. Residues Leu134 to Gly138, Asp167, Gly180, and Asn272 each bind substrate. Asp300 is a binding site for Fe cation.

The protein belongs to the KAE1 / TsaD family. Requires Fe(2+) as cofactor.

The protein resides in the cytoplasm. The catalysed reaction is L-threonylcarbamoyladenylate + adenosine(37) in tRNA = N(6)-L-threonylcarbamoyladenosine(37) in tRNA + AMP + H(+). Required for the formation of a threonylcarbamoyl group on adenosine at position 37 (t(6)A37) in tRNAs that read codons beginning with adenine. Is involved in the transfer of the threonylcarbamoyl moiety of threonylcarbamoyl-AMP (TC-AMP) to the N6 group of A37, together with TsaE and TsaB. TsaD likely plays a direct catalytic role in this reaction. This is tRNA N6-adenosine threonylcarbamoyltransferase from Edwardsiella ictaluri (strain 93-146).